Consider the following 218-residue polypeptide: Pyridoxine/pyridoxamine 5'-phosphate oxidase (218 aa).

Substrate contacts are provided by residues 14 to 17 and lysine 72; that span reads RREY. FMN is bound by residues 67–72, 82–83, arginine 88, lysine 89, and glutamine 111; these read RIVLLK and YT. Residues tyrosine 129, arginine 133, and serine 137 each coordinate substrate. FMN is bound by residues 146–147 and tryptophan 191; that span reads QS. 197 to 199 provides a ligand contact to substrate; sequence RLH. Arginine 201 is an FMN binding site.

Belongs to the pyridoxamine 5'-phosphate oxidase family. Homodimer. FMN serves as cofactor.

The catalysed reaction is pyridoxamine 5'-phosphate + O2 + H2O = pyridoxal 5'-phosphate + H2O2 + NH4(+). The enzyme catalyses pyridoxine 5'-phosphate + O2 = pyridoxal 5'-phosphate + H2O2. Its pathway is cofactor metabolism; pyridoxal 5'-phosphate salvage; pyridoxal 5'-phosphate from pyridoxamine 5'-phosphate: step 1/1. The protein operates within cofactor metabolism; pyridoxal 5'-phosphate salvage; pyridoxal 5'-phosphate from pyridoxine 5'-phosphate: step 1/1. Functionally, catalyzes the oxidation of either pyridoxine 5'-phosphate (PNP) or pyridoxamine 5'-phosphate (PMP) into pyridoxal 5'-phosphate (PLP). The sequence is that of Pyridoxine/pyridoxamine 5'-phosphate oxidase from Enterobacter sp. (strain 638).